A 115-amino-acid polypeptide reads, in one-letter code: MSRLKFVRVGLPFFAIVLGSAYGLHFFQQVRFDFRKIKQEDDNLELLRSDLTRSGLRLREGVTVESVYKEVAELDTDNWENIRGPRDTEDLTDYNLIKKQQQEASRKVRELKSNV.

Over 1–6 (MSRLKF) the chain is Mitochondrial matrix. A helical membrane pass occupies residues 7–29 (VRVGLPFFAIVLGSAYGLHFFQQ). Residues 30-115 (VRFDFRKIKQ…RKVRELKSNV (86 aa)) lie on the Mitochondrial intermembrane side of the membrane.

The protein belongs to the COX16 family.

The protein resides in the mitochondrion inner membrane. Its function is as follows. Required for the assembly of the mitochondrial respiratory chain complex IV (CIV), also known as cytochrome c oxidase. The polypeptide is Cytochrome c oxidase assembly protein COX16 homolog, mitochondrial (Caenorhabditis elegans).